A 67-amino-acid chain; its full sequence is Large ribosomal subunit protein eL38 (67 aa).

This sequence belongs to the eukaryotic ribosomal protein eL38 family.

The chain is Large ribosomal subunit protein eL38 (rpl38e) from Aeropyrum pernix (strain ATCC 700893 / DSM 11879 / JCM 9820 / NBRC 100138 / K1).